Consider the following 408-residue polypeptide: Secreted mono- and diacylglycerol lipase 2 (408 aa).

An N-terminal signal peptide occupies residues 1–24; the sequence is MRFKLADSLSLITVQLILATSTLA. N177 is a glycosylation site (N-linked (GlcNAc...) asparagine). The active-site Nucleophile is S217. Residues D283 and H374 contribute to the active site.

The protein belongs to the AB hydrolase superfamily. Lipase family. Class 3 subfamily.

The protein resides in the secreted. The catalysed reaction is a monoacylglycerol + H2O = glycerol + a fatty acid + H(+). It carries out the reaction a diacylglycerol + H2O = a monoacylglycerol + a fatty acid + H(+). Secreted mono- and diacylglycerol lipase involved in plant virulence. Has a substrate preference for p-nitrophenyl esters with a carbon chain length of C10 (p-nitrophenyl caprate). The protein is Secreted mono- and diacylglycerol lipase 2 of Gibberella zeae (strain ATCC MYA-4620 / CBS 123657 / FGSC 9075 / NRRL 31084 / PH-1) (Wheat head blight fungus).